The primary structure comprises 1257 residues: MAKKFNYKLPSMVALTLVGSAVTAHQVQAAETTQDQTTNKNVLDSNKVKATTEQAKAEVKNPTQNISGTQVYQDPAIVQPKAANKTGNAQVNQKVDTTQVNGDTRATQSTTSNNAKPVTKSTNTTAPKTNNNVTSAGYSLVDDEDDNSENQINPELIKSAAKPAALETQYKAAAPKATPVAPKAKTEATPKVTTFSASAQPRSAAAAPKTSLPKYKPQVNSSINDYIRKNNLKAPKIEEDYTSYFPKYAYRNGVGRPEGIVVHDTANDRSTINGEISYMKNNYQNAFVHAFVDGDRIIETAPTDYLSWGVGAVGNPRFINVEIVHTHDYASFARSMNNYADYAATQLQYYGLKPDSAEYDGNGTVWTHYAVSKYLGGTDHADPHGYLRSHNYSYDQLYDLINEKYLIKMGKVAPWGTQSTTTPTTPSKPSTPSKPSTPSTGKLTVAANNGVAQIKPTNSGLYTTVYDKTGKATNEVQKTFAVSKTATLGNQKFYLVQDYNSGNKFGWVKEGDVVYNTAKSPVNVNQSYSIKPGTKLYTVPWGTSKQVAGSVSGSGNQTFKASKQQQIDKSIYLYGSVNGKSGWVSKAYLVDTAKPTPTPTPKPSTPTTNNKLTVSSLNGVAQINAKNNGLFTTVYDKTGKPTKEVQKTFAVTKEASLGGNKFYLVKDYNSPTLIGWVKQGDVIYNNAKSPVNVMQTYTVKPGTKLYSVPWGTYKQEAGAVSGTGNQTFKATKQQQIDKSIYLYGTVNGKSGWISKAYLAVPAAPKKAVAQPKTAVKAYAVTKPQTTQTVSKIAQVKPNNTGIRASVYEKTAKNGAKYADRTFYVTKERAHGNETYVLLNNTSHNIPLGWFNVKDLNVQNLGKEVKTTQKYTVNRSNNGLSMVPWGTKNQVILTGNNIAQGTFNATKQVSVGKDVYLYGTINNRTGWVNSKDLTAPTAVKPTTSAAKDYNYTYVIKNGNGYYYVTPNSDTAKYSLKAFNEQPFAVVKEQVINGQTWYYGKLSNGKLAWIKSTDLAKELIKYNQIGMTLNQVAQIQAGLQYKPQVQRVPGKWTDANFNDVKHAMDTKRLAQDPALKYQFLRLDQPQNISIDKINQFLKGKGVLENQGAAFNKAAQMYGINEVYLISHALLETGNGTSQLAKGADVVNNKVVTNSNTKYHNVFGIAAYDNDPLREGIKYAKQAGWDTVSKAIVGGAKFIGNSYVKAGQNTLYKMRWNPAHPGTHQYATDVDWANINAKIIKGYYDKIGEVGKYFDIPQYK.

A signal peptide spans 1–29 (MAKKFNYKLPSMVALTLVGSAVTAHQVQA). Residues 99 to 137 (QVNGDTRATQSTTSNNAKPVTKSTNTTAPKTNNNVTSAG) show a composition bias toward polar residues. 3 disordered regions span residues 99–150 (QVNG…NSEN), 173–217 (AAPK…KYKP), and 417–441 (TQST…PSTG). 2 stretches are compositionally biased toward low complexity: residues 173 to 208 (AAPK…AAAP) and 419 to 440 (STTT…TPST). The interval 197–776 (ASAQPRSAAA…AVAQPKTAVK (580 aa)) is N-acetylmuramoyl-L-alanine amidase. GW domains follow at residues 444–518 (TVAA…YNTA), 520–594 (SPVN…DTAK), 613–687 (TVSS…YNNA), 689–763 (SPVN…VPAA), 785–860 (TTQT…VQNL), 862–937 (KEVK…APTA), and 944–1018 (AAKD…KELI). Residues 777–1257 (AYAVTKPQTT…GKYFDIPQYK (481 aa)) are endo-beta-N-acetylglucosaminidase.

In the N-terminal section; belongs to the N-acetylmuramoyl-L-alanine amidase 2 family. The protein in the C-terminal section; belongs to the glycosyl hydrolase 73 family. As to quaternary structure, oligomer; forms a ring structure at the cell surface which is important for efficient partitioning of daughter cells after cell division. Undergoes proteolytic processing to generate the two extracellular lytic enzymes, probably at the septal region on the cell surface.

Its subcellular location is the secreted. It catalyses the reaction Hydrolyzes the link between N-acetylmuramoyl residues and L-amino acid residues in certain cell-wall glycopeptides.. The catalysed reaction is an N(4)-(oligosaccharide-(1-&gt;3)-[oligosaccharide-(1-&gt;6)]-beta-D-Man-(1-&gt;4)-beta-D-GlcNAc-(1-&gt;4)-alpha-D-GlcNAc)-L-asparaginyl-[protein] + H2O = an oligosaccharide-(1-&gt;3)-[oligosaccharide-(1-&gt;6)]-beta-D-Man-(1-&gt;4)-D-GlcNAc + N(4)-(N-acetyl-beta-D-glucosaminyl)-L-asparaginyl-[protein]. Functionally, endohydrolysis of the di-N-acetylchitobiosyl unit in high-mannose glycopeptides and glycoproteins containing the -[(Man)5(GlcNAc)2]-Asn structure. One N-acetyl-D-glucosamine residue remains attached to the protein; the rest of the oligosaccharide is released intact. Cleaves the peptidoglycan connecting the daughter cells at the end of the cell division cycle, resulting in the separation of the two newly divided cells. Acts as an autolysin in penicillin-induced lysis. This is Bifunctional autolysin (atl) from Staphylococcus aureus (strain MRSA252).